Here is a 391-residue protein sequence, read N- to C-terminus: GDP-mannose transporter (391 aa).

The segment covering 1 to 11 (MDDKKNEDVEM) has biased composition (basic and acidic residues). A disordered region spans residues 1–28 (MDDKKNEDVEMRNFNGRSSPSQRDPFIS). The Cytoplasmic segment spans residues 1-44 (MDDKKNEDVEMRNFNGRSSPSQRDPFISKPGAAKRGGSSFDLSN). A helical membrane pass occupies residues 45–65 (VTNSPGISILAYCLASISMTV). Topologically, residues 66 to 75 (TNKYCVSGSN) are lumenal. Residues 76 to 96 (WNLNFFYLAIQSVVCIIAIII) traverse the membrane as a helical segment. Topologically, residues 97–115 (CKQAGLITNLAPFDTKKAK) are cytoplasmic. The chain crosses the membrane as a helical span at residues 116 to 138 (TWFPISLLLVGMIYTSTKALQFL). Residues 139–141 (SVP) are Lumenal-facing. The chain crosses the membrane as a helical span at residues 142–164 (VYTIFKNLTIIVIAYGEVLWFGG). Residues 165–170 (SVTPSA) are Cytoplasmic-facing. The chain crosses the membrane as a helical span at residues 171–193 (LFSFGLMVLSSVVAAWADIQHAL). Topologically, residues 194 to 209 (YGGGATQTKEAADALS) are lumenal. The chain crosses the membrane as a helical span at residues 210-230 (TLNAGYAWMGMNVFCTAAYVL). At 231-245 (SMRKVIKKMNFKDWD) the chain is on the cytoplasmic side. A helical transmembrane segment spans residues 246–266 (TMFYNNLLTIPVLFVCSFVFE). N-linked (GlcNAc...) asparagine glycosylation is found at Asn267 and Asn272. Over 267–284 (NWSSENLTKNFPLETRNN) the chain is Lumenal. Residues 285–305 (LILGMIYSGLATIFISYCSAW) traverse the membrane as a helical segment. The Cytoplasmic portion of the chain corresponds to 306 to 313 (CIRVTSST). Residues 314–336 (TYSMVGALNKLPIAVSGLVFFAA) traverse the membrane as a helical segment. Residues 337 to 339 (PVT) are Lumenal-facing. A helical membrane pass occupies residues 340–359 (FGSVSAIFIGFVSGIVYAWA). At 360–391 (KVRQNQSKGSVLPTTQPVMSASSQSNRDAAKA) the chain is on the cytoplasmic side. Residues 369–391 (SVLPTTQPVMSASSQSNRDAAKA) form a disordered region.

This sequence belongs to the TPT transporter family. SLC35D subfamily. Homooligomer.

The protein resides in the golgi apparatus membrane. It is found in the cytoplasmic vesicle membrane. Its subcellular location is the endoplasmic reticulum membrane. In terms of biological role, involved in the import of GDP-mannose from the cytoplasm into the Golgi lumen. This is GDP-mannose transporter (vrg4) from Sclerotinia sclerotiorum (strain ATCC 18683 / 1980 / Ss-1) (White mold).